A 247-amino-acid chain; its full sequence is 3-deoxy-manno-octulosonate cytidylyltransferase (247 aa).

The protein belongs to the KdsB family.

The protein resides in the cytoplasm. It carries out the reaction 3-deoxy-alpha-D-manno-oct-2-ulosonate + CTP = CMP-3-deoxy-beta-D-manno-octulosonate + diphosphate. The protein operates within nucleotide-sugar biosynthesis; CMP-3-deoxy-D-manno-octulosonate biosynthesis; CMP-3-deoxy-D-manno-octulosonate from 3-deoxy-D-manno-octulosonate and CTP: step 1/1. It participates in bacterial outer membrane biogenesis; lipopolysaccharide biosynthesis. Functionally, activates KDO (a required 8-carbon sugar) for incorporation into bacterial lipopolysaccharide in Gram-negative bacteria. The chain is 3-deoxy-manno-octulosonate cytidylyltransferase from Methylorubrum populi (strain ATCC BAA-705 / NCIMB 13946 / BJ001) (Methylobacterium populi).